Consider the following 116-residue polypeptide: Nucleoid-associated protein MLBr02330 (116 aa).

Positions 96 to 116 (LTSAMRPTAPPPTPPTYMAGT) are disordered.

Belongs to the YbaB/EbfC family. Homodimer.

It localises to the cytoplasm. Its subcellular location is the nucleoid. In terms of biological role, binds to DNA and alters its conformation. May be involved in regulation of gene expression, nucleoid organization and DNA protection. This Mycobacterium leprae (strain Br4923) protein is Nucleoid-associated protein MLBr02330.